A 139-amino-acid polypeptide reads, in one-letter code: ATP synthase epsilon chain (139 aa).

Belongs to the ATPase epsilon chain family. F-type ATPases have 2 components, CF(1) - the catalytic core - and CF(0) - the membrane proton channel. CF(1) has five subunits: alpha(3), beta(3), gamma(1), delta(1), epsilon(1). CF(0) has three main subunits: a, b and c.

It is found in the cell membrane. Produces ATP from ADP in the presence of a proton gradient across the membrane. The polypeptide is ATP synthase epsilon chain (Roseiflexus sp. (strain RS-1)).